A 257-amino-acid polypeptide reads, in one-letter code: Ribosomal RNA small subunit methyltransferase J (257 aa).

S-adenosyl-L-methionine is bound by residues 107–108 (RD), 123–124 (ER), and D177.

This sequence belongs to the methyltransferase superfamily. RsmJ family.

It is found in the cytoplasm. The catalysed reaction is guanosine(1516) in 16S rRNA + S-adenosyl-L-methionine = N(2)-methylguanosine(1516) in 16S rRNA + S-adenosyl-L-homocysteine + H(+). Functionally, specifically methylates the guanosine in position 1516 of 16S rRNA. In Haemophilus influenzae (strain 86-028NP), this protein is Ribosomal RNA small subunit methyltransferase J.